Reading from the N-terminus, the 114-residue chain is Large ribosomal subunit protein bL17 (114 aa).

It belongs to the bacterial ribosomal protein bL17 family. Part of the 50S ribosomal subunit. Contacts protein L32.

This Elusimicrobium minutum (strain Pei191) protein is Large ribosomal subunit protein bL17.